The following is a 427-amino-acid chain: Enolase 2 (427 aa).

Glutamine 163 is a (2R)-2-phosphoglycerate binding site. Catalysis depends on glutamate 205, which acts as the Proton donor. Residues aspartate 242, glutamate 285, and aspartate 312 each contribute to the Mg(2+) site. (2R)-2-phosphoglycerate contacts are provided by lysine 337, arginine 366, serine 367, and lysine 388. Residue lysine 337 is the Proton acceptor of the active site.

This sequence belongs to the enolase family. Component of the RNA degradosome, a multiprotein complex involved in RNA processing and mRNA degradation. Mg(2+) is required as a cofactor.

The protein localises to the cytoplasm. The protein resides in the secreted. It is found in the cell surface. The enzyme catalyses (2R)-2-phosphoglycerate = phosphoenolpyruvate + H2O. Its pathway is carbohydrate degradation; glycolysis; pyruvate from D-glyceraldehyde 3-phosphate: step 4/5. Functionally, catalyzes the reversible conversion of 2-phosphoglycerate (2-PG) into phosphoenolpyruvate (PEP). It is essential for the degradation of carbohydrates via glycolysis. The chain is Enolase 2 from Methylococcus capsulatus (strain ATCC 33009 / NCIMB 11132 / Bath).